Reading from the N-terminus, the 100-residue chain is Integration host factor subunit alpha (100 aa).

The tract at residues 50–70 (GNFQLRDKPQRPGRNPKTGEE) is disordered.

The protein belongs to the bacterial histone-like protein family. As to quaternary structure, heterodimer of an alpha and a beta chain.

In terms of biological role, this protein is one of the two subunits of integration host factor, a specific DNA-binding protein that functions in genetic recombination as well as in transcriptional and translational control. The sequence is that of Integration host factor subunit alpha from Chromobacterium violaceum (strain ATCC 12472 / DSM 30191 / JCM 1249 / CCUG 213 / NBRC 12614 / NCIMB 9131 / NCTC 9757 / MK).